The following is an 833-amino-acid chain: Translation initiation factor IF-2 (833 aa).

The tract at residues Met1–Ala247 is disordered. Basic and acidic residues-rich tracts occupy residues Gln53–Lys99 and Val110–Glu152. Acidic residues predominate over residues Leu153–Tyr166. The segment covering Lys187–Lys203 has biased composition (basic residues). Residues Gly204–Met227 show a composition bias toward basic and acidic residues. The 170-residue stretch at Thr333–Thr502 folds into the tr-type G domain. Positions Gly342–Thr349 are G1. Gly342–Thr349 contributes to the GTP binding site. A G2 region spans residues Gly367 to His371. Positions Asp388–Gly391 are G3. GTP contacts are provided by residues Asp388–His392 and Asn442–Asp445. Positions Asn442 to Asp445 are G4. A G5 region spans residues Ser478–Lys480.

Belongs to the TRAFAC class translation factor GTPase superfamily. Classic translation factor GTPase family. IF-2 subfamily.

Its subcellular location is the cytoplasm. Its function is as follows. One of the essential components for the initiation of protein synthesis. Protects formylmethionyl-tRNA from spontaneous hydrolysis and promotes its binding to the 30S ribosomal subunits. Also involved in the hydrolysis of GTP during the formation of the 70S ribosomal complex. The chain is Translation initiation factor IF-2 (infB) from Pasteurella multocida (strain Pm70).